The primary structure comprises 72 residues: Prokaryotic ubiquitin-like protein Pup (72 aa).

Residues 1-11 (MAQRDTGGGQQ) are compositionally biased toward gly residues. Residues 1-41 (MAQRDTGGGQQRTGRRDDETAEAEVEESGASDLKERHEKLS) form a disordered region. Residues 19-29 (ETAEAEVEESG) show a composition bias toward acidic residues. Positions 22–61 (EAEVEESGASDLKERHEKLSEDVDSLLDEIDDVLEENAEE) form a coiled coil. The segment at 28-66 (SGASDLKERHEKLSEDVDSLLDEIDDVLEENAEEFVKGY) is ARC ATPase binding. The span at 32 to 41 (DLKERHEKLS) shows a compositional bias: basic and acidic residues. Q72 is modified (deamidated glutamine). Q72 participates in a covalent cross-link: Isoglutamyl lysine isopeptide (Gln-Lys) (interchain with K-? in acceptor proteins).

This sequence belongs to the prokaryotic ubiquitin-like protein family. In terms of assembly, strongly interacts with the proteasome-associated ATPase ARC through a hydrophobic interface; the interacting region of Pup lies in its C-terminal half. There is one Pup binding site per ARC hexamer ring. In terms of processing, is modified by deamidation of its C-terminal glutamine to glutamate by the deamidase Dop, a prerequisite to the subsequent pupylation process.

It functions in the pathway protein degradation; proteasomal Pup-dependent pathway. Functionally, protein modifier that is covalently attached to lysine residues of substrate proteins, thereby targeting them for proteasomal degradation. The tagging system is termed pupylation. The polypeptide is Prokaryotic ubiquitin-like protein Pup (Parafrankia sp. (strain EAN1pec)).